The following is a 120-amino-acid chain: Fumarate reductase subunit D (120 aa).

3 helical membrane passes run 25-45 (FAML…LGVI), 55-75 (VAGF…ISMP), and 100-120 (IACY…IFMI).

Belongs to the FrdD family. Part of an enzyme complex containing four subunits: a flavoprotein (FrdA), an iron-sulfur protein (FrdB), and two hydrophobic anchor proteins (FrdC and FrdD).

It is found in the cell inner membrane. In terms of biological role, anchors the catalytic components of the fumarate reductase complex to the cell membrane, binds quinones. The chain is Fumarate reductase subunit D from Aliivibrio fischeri (strain MJ11) (Vibrio fischeri).